A 190-amino-acid polypeptide reads, in one-letter code: dTTP/UTP pyrophosphatase (190 aa).

Aspartate 71 (proton acceptor) is an active-site residue.

It belongs to the Maf family. YhdE subfamily. A divalent metal cation is required as a cofactor.

It localises to the cytoplasm. It catalyses the reaction dTTP + H2O = dTMP + diphosphate + H(+). The catalysed reaction is UTP + H2O = UMP + diphosphate + H(+). Nucleoside triphosphate pyrophosphatase that hydrolyzes dTTP and UTP. May have a dual role in cell division arrest and in preventing the incorporation of modified nucleotides into cellular nucleic acids. This Xanthomonas euvesicatoria pv. vesicatoria (strain 85-10) (Xanthomonas campestris pv. vesicatoria) protein is dTTP/UTP pyrophosphatase.